We begin with the raw amino-acid sequence, 453 residues long: C4-dicarboxylate TRAP transporter large permease protein DctM (453 aa).

13 helical membrane-spanning segments follow: residues 2–22, 50–70, 82–102, 104–124, 139–159, 172–192, 217–237, 243–263, 289–309, 326–346, 356–376, 380–400, and 417–437; these read AVAL…PIAI, AFAG…STFM, FAIA…VVAC, MFAA…SIVI, GVIC…VMVV, FLGG…AIYI, ASWG…GIFT, AVAA…MGPF, LYDA…ALIL, MLSA…ILLV, LLVI…IDPI, IMMV…LNLF, and ALPW…VPWV.

This sequence belongs to the TRAP transporter large permease family. As to quaternary structure, the complex comprises the extracytoplasmic solute receptor protein DctP, and the two transmembrane proteins DctQ and DctM.

Its subcellular location is the cell inner membrane. Part of the tripartite ATP-independent periplasmic (TRAP) transport system DctPQM involved in C4-dicarboxylates uptake. The polypeptide is C4-dicarboxylate TRAP transporter large permease protein DctM (Vibrio cholerae serotype O1 (strain ATCC 39315 / El Tor Inaba N16961)).